Consider the following 616-residue polypeptide: Dihydroxy-acid dehydratase (616 aa).

Asp-81 contributes to the Mg(2+) binding site. [2Fe-2S] cluster is bound at residue Cys-122. Mg(2+) is bound by residues Asp-123 and Lys-124. Lys-124 carries the post-translational modification N6-carboxylysine. [2Fe-2S] cluster is bound at residue Cys-195. Glu-491 contributes to the Mg(2+) binding site. Ser-517 serves as the catalytic Proton acceptor.

The protein belongs to the IlvD/Edd family. In terms of assembly, homodimer. Requires [2Fe-2S] cluster as cofactor. Mg(2+) serves as cofactor.

The enzyme catalyses (2R)-2,3-dihydroxy-3-methylbutanoate = 3-methyl-2-oxobutanoate + H2O. It catalyses the reaction (2R,3R)-2,3-dihydroxy-3-methylpentanoate = (S)-3-methyl-2-oxopentanoate + H2O. It functions in the pathway amino-acid biosynthesis; L-isoleucine biosynthesis; L-isoleucine from 2-oxobutanoate: step 3/4. It participates in amino-acid biosynthesis; L-valine biosynthesis; L-valine from pyruvate: step 3/4. Functions in the biosynthesis of branched-chain amino acids. Catalyzes the dehydration of (2R,3R)-2,3-dihydroxy-3-methylpentanoate (2,3-dihydroxy-3-methylvalerate) into 2-oxo-3-methylpentanoate (2-oxo-3-methylvalerate) and of (2R)-2,3-dihydroxy-3-methylbutanoate (2,3-dihydroxyisovalerate) into 2-oxo-3-methylbutanoate (2-oxoisovalerate), the penultimate precursor to L-isoleucine and L-valine, respectively. The protein is Dihydroxy-acid dehydratase of Edwardsiella ictaluri (strain 93-146).